Reading from the N-terminus, the 231-residue chain is Large ribosomal subunit protein uL1 (231 aa).

The protein belongs to the universal ribosomal protein uL1 family. Part of the 50S ribosomal subunit.

In terms of biological role, binds directly to 23S rRNA. The L1 stalk is quite mobile in the ribosome, and is involved in E site tRNA release. Functionally, protein L1 is also a translational repressor protein, it controls the translation of the L11 operon by binding to its mRNA. In Acinetobacter baumannii (strain AB307-0294), this protein is Large ribosomal subunit protein uL1.